A 54-amino-acid polypeptide reads, in one-letter code: Potassium channel toxin alpha-KTx 14.1 (54 aa).

Positions 1 to 23 (MKIFFAILLILAVCSMAIWTVNG) are cleaved as a signal peptide.

This sequence belongs to the short scorpion toxin superfamily. Potassium channel inhibitor family. Alpha-KTx 14 subfamily. Post-translationally, probably has three disulfide bridges. Expressed by the venom gland.

It is found in the secreted. In terms of biological role, potential blocker of potassium channels. The sequence is that of Potassium channel toxin alpha-KTx 14.1 from Olivierus martensii (Manchurian scorpion).